Consider the following 101-residue polypeptide: Small ribosomal subunit protein uS14 (101 aa).

Belongs to the universal ribosomal protein uS14 family. Part of the 30S ribosomal subunit. Contacts proteins S3 and S10.

Its function is as follows. Binds 16S rRNA, required for the assembly of 30S particles and may also be responsible for determining the conformation of the 16S rRNA at the A site. This Francisella tularensis subsp. tularensis (strain FSC 198) protein is Small ribosomal subunit protein uS14.